Consider the following 119-residue polypeptide: Chorion class B protein M2807 (119 aa).

Residues 1–11 (GGLGGGCGRGF) are left arm. Positions 12-80 (SGGGLPVATA…GNGAVGITRE (69 aa)) are central domain. Residues 81 to 119 (GGLGYGAGYGDGYGLGYGGYGGGYGLGYGGYGGCGCGCG) form a right arm (Gly-rich tandem repeats) region.

Belongs to the chorion protein family.

This protein is one of many from the eggshell of the silk moth. The sequence is that of Chorion class B protein M2807 from Bombyx mori (Silk moth).